Consider the following 479-residue polypeptide: Nucleoside-diphosphatase uda-1 (479 aa).

Residues 1–7 (MLFPAFS) lie on the Cytoplasmic side of the membrane. Residues 8 to 24 (ILLISFFSLLSVVTTKT) traverse the membrane as a helical; Signal-anchor for type II membrane protein segment. The Lumenal segment spans residues 25 to 479 (QYWCHGDGVL…VLSYFNIISV (455 aa)). Residue E171 is the Proton acceptor of the active site. N-linked (GlcNAc...) asparagine glycans are attached at residues N300 and N452.

This sequence belongs to the GDA1/CD39 NTPase family. Ca(2+) is required as a cofactor. Mg(2+) serves as cofactor. Requires Mn(2+) as cofactor.

Its subcellular location is the endomembrane system. The catalysed reaction is a ribonucleoside 5'-diphosphate + H2O = a ribonucleoside 5'-phosphate + phosphate + H(+). Its function is as follows. Hydrolyzes UDP and GDP but not any other nucleoside di-, mono- or triphosphates. May promote reglycosylation reactions involved in glycoproteins folding and quality control in the endoplasmic reticulum. This is Nucleoside-diphosphatase uda-1 (uda-1) from Caenorhabditis elegans.